A 446-amino-acid chain; its full sequence is Histidine--tRNA ligase (446 aa).

A disordered region spans residues 403 to 422 (TASVKPLRGTGDDGEKSVQQ).

It belongs to the class-II aminoacyl-tRNA synthetase family. In terms of assembly, homodimer.

The protein resides in the cytoplasm. The enzyme catalyses tRNA(His) + L-histidine + ATP = L-histidyl-tRNA(His) + AMP + diphosphate + H(+). The sequence is that of Histidine--tRNA ligase from Burkholderia thailandensis (strain ATCC 700388 / DSM 13276 / CCUG 48851 / CIP 106301 / E264).